Reading from the N-terminus, the 81-residue chain is Large ribosomal subunit protein bL31B (81 aa).

It belongs to the bacterial ribosomal protein bL31 family. Type B subfamily. As to quaternary structure, part of the 50S ribosomal subunit.

This is Large ribosomal subunit protein bL31B from Lactococcus lactis subsp. cremoris (strain MG1363).